Here is a 313-residue protein sequence, read N- to C-terminus: Adhesin MafA 2 (313 aa).

Residues 1-14 (MKTLLLLIPLVLTA) form the signal peptide. Residue cysteine 15 is the site of N-palmitoyl cysteine attachment. Residue cysteine 15 is the site of S-diacylglycerol cysteine attachment. The segment covering 282–297 (GDTTAQNRPDFKQNNG) has biased composition (polar residues). Positions 282-313 (GDTTAQNRPDFKQNNGKKPDVGNEVIRRRKGG) are disordered.

This sequence belongs to the MafA family.

The protein localises to the cell outer membrane. This Neisseria meningitidis serogroup A / serotype 4A (strain DSM 15465 / Z2491) protein is Adhesin MafA 2 (mafA2).